Here is a 186-residue protein sequence, read N- to C-terminus: uncharacterized protein (186 aa).

3 disordered regions span residues 17–47, 77–105, and 121–164; these read LSGE…EETF, EDKL…AAEA, and QQAA…PVAG. Over residues 90–105 the composition is skewed to low complexity; it reads PLAARPPSQAAAAAEA. Positions 136–149 are enriched in acidic residues; sequence PEPDPEPADEAAEE.

This is an uncharacterized protein from Homo sapiens (Human).